A 304-amino-acid polypeptide reads, in one-letter code: CRISPR-associated endonuclease Cas1 (304 aa).

Mn(2+) is bound by residues Glu-148, His-204, and Glu-219.

This sequence belongs to the CRISPR-associated endonuclease Cas1 family. Homodimer, forms a heterotetramer with a Cas2 homodimer. Mg(2+) is required as a cofactor. Requires Mn(2+) as cofactor.

Its function is as follows. CRISPR (clustered regularly interspaced short palindromic repeat), is an adaptive immune system that provides protection against mobile genetic elements (viruses, transposable elements and conjugative plasmids). CRISPR clusters contain spacers, sequences complementary to antecedent mobile elements, and target invading nucleic acids. CRISPR clusters are transcribed and processed into CRISPR RNA (crRNA). Acts as a dsDNA endonuclease. Involved in the integration of spacer DNA into the CRISPR cassette. In Neisseria meningitidis serogroup C (strain 8013), this protein is CRISPR-associated endonuclease Cas1.